We begin with the raw amino-acid sequence, 199 residues long: Elongation factor Ts (199 aa).

The segment at 82 to 85 is involved in Mg(2+) ion dislocation from EF-Tu; the sequence is TDFV.

This sequence belongs to the EF-Ts family.

Its subcellular location is the cytoplasm. In terms of biological role, associates with the EF-Tu.GDP complex and induces the exchange of GDP to GTP. It remains bound to the aminoacyl-tRNA.EF-Tu.GTP complex up to the GTP hydrolysis stage on the ribosome. The protein is Elongation factor Ts of Leptospira interrogans serogroup Icterohaemorrhagiae serovar copenhageni (strain Fiocruz L1-130).